The sequence spans 385 residues: Mannitol-1-phosphate 5-dehydrogenase (385 aa).

3–14 serves as a coordination point for NAD(+); it reads ALQFGAGNIGRG.

Belongs to the mannitol dehydrogenase family.

It catalyses the reaction D-mannitol 1-phosphate + NAD(+) = beta-D-fructose 6-phosphate + NADH + H(+). This chain is Mannitol-1-phosphate 5-dehydrogenase, found in Buchnera aphidicola subsp. Acyrthosiphon pisum (strain Tuc7).